Consider the following 876-residue polypeptide: Alanine--tRNA ligase (876 aa).

Lys74 bears the N6-acetyllysine mark. Zn(2+)-binding residues include His564, His568, Cys666, and His670.

The protein belongs to the class-II aminoacyl-tRNA synthetase family. As to quaternary structure, homotetramer. Requires Zn(2+) as cofactor.

The protein resides in the cytoplasm. It carries out the reaction tRNA(Ala) + L-alanine + ATP = L-alanyl-tRNA(Ala) + AMP + diphosphate. Functionally, catalyzes the attachment of alanine to tRNA(Ala) in a two-step reaction: alanine is first activated by ATP to form Ala-AMP and then transferred to the acceptor end of tRNA(Ala). Also edits incorrectly charged Ser-tRNA(Ala) and Gly-tRNA(Ala) via its editing domain. This Escherichia coli O9:H4 (strain HS) protein is Alanine--tRNA ligase.